The following is a 198-amino-acid chain: Glycerol-3-phosphate acyltransferase (198 aa).

5 consecutive transmembrane segments (helical) span residues phenylalanine 6–leucine 26, glycine 55–serine 75, alanine 83–phenylalanine 103, isoleucine 113–alanine 133, and isoleucine 154–leucine 174.

The protein belongs to the PlsY family. As to quaternary structure, probably interacts with PlsX.

Its subcellular location is the cell inner membrane. The enzyme catalyses an acyl phosphate + sn-glycerol 3-phosphate = a 1-acyl-sn-glycero-3-phosphate + phosphate. The protein operates within lipid metabolism; phospholipid metabolism. Its function is as follows. Catalyzes the transfer of an acyl group from acyl-phosphate (acyl-PO(4)) to glycerol-3-phosphate (G3P) to form lysophosphatidic acid (LPA). This enzyme utilizes acyl-phosphate as fatty acyl donor, but not acyl-CoA or acyl-ACP. The chain is Glycerol-3-phosphate acyltransferase from Bradyrhizobium sp. (strain BTAi1 / ATCC BAA-1182).